Reading from the N-terminus, the 375-residue chain is Alcohol dehydrogenase E chain (375 aa).

An N-acetylserine modification is found at serine 2. Residues cysteine 47, serine 49, histidine 68, cysteine 98, cysteine 101, cysteine 104, cysteine 112, and cysteine 175 each coordinate Zn(2+). Serine 49 and histidine 68 together coordinate an alcohol. Position 49 (serine 49) interacts with NAD(+). Residues glycine 200–glycine 205, aspartate 224, lysine 229, valine 293, valine 293–valine 295, phenylalanine 320, and arginine 370 contribute to the NAD(+) site.

This sequence belongs to the zinc-containing alcohol dehydrogenase family. Class-I subfamily. As to quaternary structure, dimer of identical or non-identical chains of two types (E and S) coded by 2 separate genes at different loci. Zn(2+) serves as cofactor.

It is found in the cytoplasm. It catalyses the reaction a primary alcohol + NAD(+) = an aldehyde + NADH + H(+). The catalysed reaction is a secondary alcohol + NAD(+) = a ketone + NADH + H(+). In Equus caballus (Horse), this protein is Alcohol dehydrogenase E chain.